The sequence spans 707 residues: Ornithine decarboxylase (707 aa).

The disordered stretch occupies residues 83-102; it reads NRNPLSRADSAAGREETAQT. The residue at position 288 (Lys288) is an N6-(pyridoxal phosphate)lysine. Pyridoxal 5'-phosphate contacts are provided by residues Ser421, Gly458, and 498 to 501; that span reads EPGR. Residue 561–562 coordinates substrate; that stretch reads FD. Cys634 acts as the Proton donor; shared with dimeric partner in catalysis. Substrate is bound at residue Asp635. Tyr663 is a pyridoxal 5'-phosphate binding site.

The protein belongs to the Orn/Lys/Arg decarboxylase class-II family. As to quaternary structure, homodimer. Only the dimer is catalytically active, as the active sites are constructed of residues from both monomers. Pyridoxal 5'-phosphate is required as a cofactor.

The enzyme catalyses L-ornithine + H(+) = putrescine + CO2. It functions in the pathway amine and polyamine biosynthesis; putrescine biosynthesis via L-ornithine pathway; putrescine from L-ornithine: step 1/1. Inhibited by antizyme (AZ) in response to polyamine levels. AZ inhibits the assembly of the functional homodimer by binding to ODC monomers and targeting them for ubiquitin-independent proteolytic destruction by the 26S proteasome. Inhibited by 1-amino-oxy-3-aminopropane (APA, an isosteric analog of putrescine). Irreversibly inhibited by alpha-difluoromethylornithine (DFMO, a curative agent of West African sleeping sickness). In terms of biological role, catalyzes the first and rate-limiting step of polyamine biosynthesis that converts ornithine into putrescine, which is the precursor for the polyamines, spermidine and spermine. Polyamines are essential for cell proliferation and are implicated in cellular processes, ranging from DNA replication to apoptosis. This chain is Ornithine decarboxylase, found in Leishmania donovani.